The chain runs to 729 residues: Fatty acid oxidation complex subunit alpha (729 aa).

The enoyl-CoA hydratase/isomerase stretch occupies residues M1–A189. Residue D296 coordinates substrate. The segment at S311–A729 is 3-hydroxyacyl-CoA dehydrogenase. NAD(+)-binding positions include M324, D343, V400–E402, K407, and S429. Residue H450 is the For 3-hydroxyacyl-CoA dehydrogenase activity of the active site. N453 provides a ligand contact to NAD(+). Substrate contacts are provided by N500 and Y660.

It in the N-terminal section; belongs to the enoyl-CoA hydratase/isomerase family. This sequence in the C-terminal section; belongs to the 3-hydroxyacyl-CoA dehydrogenase family. As to quaternary structure, heterotetramer of two alpha chains (FadB) and two beta chains (FadA).

It catalyses the reaction a (3S)-3-hydroxyacyl-CoA + NAD(+) = a 3-oxoacyl-CoA + NADH + H(+). It carries out the reaction a (3S)-3-hydroxyacyl-CoA = a (2E)-enoyl-CoA + H2O. The catalysed reaction is a 4-saturated-(3S)-3-hydroxyacyl-CoA = a (3E)-enoyl-CoA + H2O. The enzyme catalyses (3S)-3-hydroxybutanoyl-CoA = (3R)-3-hydroxybutanoyl-CoA. It catalyses the reaction a (3Z)-enoyl-CoA = a 4-saturated (2E)-enoyl-CoA. It carries out the reaction a (3E)-enoyl-CoA = a 4-saturated (2E)-enoyl-CoA. The protein operates within lipid metabolism; fatty acid beta-oxidation. Its function is as follows. Involved in the aerobic and anaerobic degradation of long-chain fatty acids via beta-oxidation cycle. Catalyzes the formation of 3-oxoacyl-CoA from enoyl-CoA via L-3-hydroxyacyl-CoA. It can also use D-3-hydroxyacyl-CoA and cis-3-enoyl-CoA as substrate. The chain is Fatty acid oxidation complex subunit alpha from Yersinia enterocolitica serotype O:8 / biotype 1B (strain NCTC 13174 / 8081).